The following is a 419-amino-acid chain: Transcription termination factor Rho (419 aa).

The Rho RNA-BD domain maps to 48-123 (DIFGDGVLEI…LKVNEVNFDK (76 aa)). RNA-binding stretches follow at residues 61-66 (GFGFLR), 78-80 (DIY), and 108-110 (ERY). Residues 169-174 (GRGQRG), 181-186 (KAGKTM), and Arg-212 each bind ATP. Residues 284–288 (VLTGG) form an RNA-binding 2 region.

This sequence belongs to the Rho family. As to quaternary structure, homohexamer. The homohexamer assembles into an open ring structure.

In terms of biological role, facilitates transcription termination by a mechanism that involves Rho binding to the nascent RNA, activation of Rho's RNA-dependent ATPase activity, and release of the mRNA from the DNA template. The sequence is that of Transcription termination factor Rho from Escherichia coli O157:H7.